The chain runs to 115 residues: Basic leucine zipper transcriptional factor ATF-like (115 aa).

Residues 1-60 (MQQESDRNEQGYSSSPPSSNKQDSSDDTKKNHRREKNRIAAQKSRQRQTEKADSLHIESE) form a disordered region. Residues 13-22 (SSSPPSSNKQ) show a composition bias toward low complexity. The bZIP domain maps to 27–90 (DTKKNHRREK…KYLTCVLSTH (64 aa)). Residues 29-51 (KKNHRREKNRIAAQKSRQRQTEK) are basic motif. The span at 47–60 (RQTEKADSLHIESE) shows a compositional bias: basic and acidic residues. The segment at 55–83 (LHIESENLERLNSALRGEISGLREELKYL) is leucine-zipper.

It belongs to the bZIP family.

It localises to the nucleus. Its subcellular location is the cytoplasm. AP-1 family transcription factor that controls the differentiation of lineage-specific cells in the immune system: specifically mediates the differentiation of T-helper 17 cells (Th17), follicular T-helper cells (TfH), CD8(+) dendritic cells and class-switch recombination (CSR) in B-cells. The protein is Basic leucine zipper transcriptional factor ATF-like (batf) of Xenopus laevis (African clawed frog).